The following is a 235-amino-acid chain: Probable septum site-determining protein MinC (235 aa).

Positions 104-125 (KAVRPAPVEPATPSEPPQNANP) are disordered. Residues 110-119 (PVEPATPSEP) are compositionally biased toward pro residues.

Belongs to the MinC family. Interacts with MinD and FtsZ.

Cell division inhibitor that blocks the formation of polar Z ring septums. Rapidly oscillates between the poles of the cell to destabilize FtsZ filaments that have formed before they mature into polar Z rings. Prevents FtsZ polymerization. The sequence is that of Probable septum site-determining protein MinC from Salmonella enteritidis PT4 (strain P125109).